Here is an 843-residue protein sequence, read N- to C-terminus: Ribosome biogenesis protein ERB1 (843 aa).

Disordered stretches follow at residues 36 to 189 (KKAA…RYIY) and 364 to 419 (ADES…REYL). 3 stretches are compositionally biased toward acidic residues: residues 77–92 (VDED…YDLE), 106–139 (SDSE…EVPS), and 163–172 (ESNDLSDDNE). The span at 173-183 (PNYRIEKDANG) shows a compositional bias: basic and acidic residues. Over residues 379–396 (PKLPPPGYEESYHPPPEY) the composition is skewed to pro residues. Residues 397–406 (LPDKKEKEEW) are compositionally biased toward basic and acidic residues. WD repeat units lie at residues 487 to 526 (GHRG…QLWS), 530 to 570 (SDED…LELE), 668 to 706 (KGGG…LVKI), 709 to 754 (PGAR…RPYK), 758 to 797 (YHQK…DLLS), and 813 to 843 (TGDL…RLWM).

The protein belongs to the WD repeat BOP1/ERB1 family. Component of the NOP7 complex, composed of ERB1, NOP7 and YTM1. The complex is held together by ERB1, which interacts with NOP7 via its N-terminal domain and with YTM1 via a high-affinity interaction between the seven-bladed beta-propeller domains of the 2 proteins. The NOP7 complex associates with the 66S pre-ribosome.

The protein localises to the nucleus. It is found in the nucleolus. Its subcellular location is the nucleoplasm. Component of the NOP7 complex, which is required for maturation of the 25S and 5.8S ribosomal RNAs and formation of the 60S ribosome. The sequence is that of Ribosome biogenesis protein ERB1 from Coccidioides immitis (strain RS) (Valley fever fungus).